Here is a 177-residue protein sequence, read N- to C-terminus: Flavodoxin (177 aa).

Positions 4 to 173 (IGIFFGSDTG…RIDSWLEKLK (170 aa)) constitute a Flavodoxin-like domain.

This sequence belongs to the flavodoxin family. FMN serves as cofactor.

Functionally, low-potential electron donor to a number of redox enzymes. NifF is the electron donor to nitrogenase. The polypeptide is Flavodoxin (nifF) (Enterobacter agglomerans (Erwinia herbicola)).